The primary structure comprises 194 residues: ATP-dependent Clp protease proteolytic subunit (194 aa).

Serine 98 serves as the catalytic Nucleophile. The active site involves histidine 123.

Belongs to the peptidase S14 family. Fourteen ClpP subunits assemble into 2 heptameric rings which stack back to back to give a disk-like structure with a central cavity, resembling the structure of eukaryotic proteasomes.

The protein resides in the cytoplasm. It carries out the reaction Hydrolysis of proteins to small peptides in the presence of ATP and magnesium. alpha-casein is the usual test substrate. In the absence of ATP, only oligopeptides shorter than five residues are hydrolyzed (such as succinyl-Leu-Tyr-|-NHMec, and Leu-Tyr-Leu-|-Tyr-Trp, in which cleavage of the -Tyr-|-Leu- and -Tyr-|-Trp bonds also occurs).. Cleaves peptides in various proteins in a process that requires ATP hydrolysis. Has a chymotrypsin-like activity. Plays a major role in the degradation of misfolded proteins. The protein is ATP-dependent Clp protease proteolytic subunit of Staphylococcus epidermidis (strain ATCC 35984 / DSM 28319 / BCRC 17069 / CCUG 31568 / BM 3577 / RP62A).